A 354-amino-acid polypeptide reads, in one-letter code: Rhodopsin (354 aa).

At 1-36 the chain is on the extracellular side; that stretch reads MNGTEGENFYVPMSNKTGVVRSPFDYPQYYLGEPWM. Asparagine 2 and asparagine 15 each carry an N-linked (GlcNAc...) asparagine glycan. A helical transmembrane segment spans residues 37–61; sequence FSALAAYMFFLILTGLPVNFLTLFV. The Cytoplasmic segment spans residues 62-73; that stretch reads TIQHKKLRQPLN. Residues 74–96 traverse the membrane as a helical segment; it reads YILLNLAVSDLFMVFGGFTTTII. Over 97–110 the chain is Extracellular; sequence TSMNGYFIFGPAGC. A disulfide bridge connects residues cysteine 110 and cysteine 187. A helical transmembrane segment spans residues 111–133; it reads NFEGFFATLGGEVGLWCLVVLAI. The 'Ionic lock' involved in activated form stabilization motif lies at 134-136; it reads ERY. At 134-152 the chain is on the cytoplasmic side; sequence ERYMVVCKPMANFRFGSQH. Residues 153 to 173 traverse the membrane as a helical segment; sequence AIIGVVFTWIMALSCAGPPLV. The Extracellular portion of the chain corresponds to 174 to 202; the sequence is GWSRYIPEGLQCSCGVDYYTMKPEVNNES. A helical transmembrane segment spans residues 203–224; that stretch reads FVIYMFVVHFTIPLIVIFFCYG. Topologically, residues 225 to 252 are cytoplasmic; sequence RLVCTVKEAAAQQQESESTQRAEREVTR. A helical transmembrane segment spans residues 253–274; the sequence is MVIIMVVAFLICWVPYASVAFY. Topologically, residues 275–286 are extracellular; sequence IFINQGCDFTPF. Residues 287–308 form a helical membrane-spanning segment; the sequence is FMTVPAFFAKSSAVYNPLIYIL. Lysine 296 bears the N6-(retinylidene)lysine mark. The Cytoplasmic portion of the chain corresponds to 309-354; it reads MNKQFRNCMITTICLGKNPFEEEESTSASASKTEASSVSSSQVAPA. Cysteine 322 is lipidated: S-palmitoyl cysteine. Residues 333–354 are disordered; it reads STSASASKTEASSVSSSQVAPA. Residues 334 to 354 are compositionally biased toward low complexity; sequence TSASASKTEASSVSSSQVAPA.

It belongs to the G-protein coupled receptor 1 family. Opsin subfamily. In terms of processing, phosphorylated on some or all of the serine and threonine residues present in the C-terminal region. Contains one covalently linked retinal chromophore.

It localises to the membrane. Its subcellular location is the cell projection. It is found in the cilium. The protein resides in the photoreceptor outer segment. Its function is as follows. Photoreceptor required for image-forming vision at low light intensity. While most salt water fish species use retinal as chromophore, most freshwater fish use 3-dehydroretinal, or a mixture of retinal and 3-dehydroretinal. Light-induced isomerization of 11-cis to all-trans retinal triggers a conformational change that activates signaling via G-proteins. Subsequent receptor phosphorylation mediates displacement of the bound G-protein alpha subunit by arrestin and terminates signaling. The chain is Rhodopsin (rho) from Leucoraja erinaceus (Little skate).